The sequence spans 320 residues: MRQTKTGILLANLGTPDAPTPEAVKRYLKQFLSDRRVVDTSRLLWWPLLRSVILPLRSPRVAKLYASVWMEGGSPLMVYSRQQQQALAQRLPETPVALGMSYGSPSLESAVDELLAEHVDHIVVLPLYPQYSCSTVGAVWDELARILARKRSIPGISFIRDYADNHDYINALANSVRASFAKHGEPDLLLLSYHGIPQRYADEGDDYPQRCRTTTRELASALEMAPEKVMMTFQSRFGREPWLMPYTDETLKMLGEKGVGHIQVMCPGFAADCLETLEEIAEQNREVFLGAGGKKYEYIPALNATPEHIEMMANLVAAYR.

Fe cation contacts are provided by histidine 194 and glutamate 275.

The protein belongs to the ferrochelatase family. As to quaternary structure, monomer.

It is found in the cytoplasm. It catalyses the reaction heme b + 2 H(+) = protoporphyrin IX + Fe(2+). It participates in porphyrin-containing compound metabolism; protoheme biosynthesis; protoheme from protoporphyrin-IX: step 1/1. In terms of biological role, catalyzes the ferrous insertion into protoporphyrin IX. This is Ferrochelatase from Escherichia coli O45:K1 (strain S88 / ExPEC).